A 228-amino-acid polypeptide reads, in one-letter code: Phosphatidylserine decarboxylase proenzyme (228 aa).

Serine 197 serves as the catalytic Schiff-base intermediate with substrate; via pyruvic acid. Serine 197 is subject to Pyruvic acid (Ser); by autocatalysis.

Belongs to the phosphatidylserine decarboxylase family. PSD-A subfamily. Heterodimer of a large membrane-associated beta subunit and a small pyruvoyl-containing alpha subunit. It depends on pyruvate as a cofactor. In terms of processing, is synthesized initially as an inactive proenzyme. Formation of the active enzyme involves a self-maturation process in which the active site pyruvoyl group is generated from an internal serine residue via an autocatalytic post-translational modification. Two non-identical subunits are generated from the proenzyme in this reaction, and the pyruvate is formed at the N-terminus of the alpha chain, which is derived from the carboxyl end of the proenzyme. The post-translation cleavage follows an unusual pathway, termed non-hydrolytic serinolysis, in which the side chain hydroxyl group of the serine supplies its oxygen atom to form the C-terminus of the beta chain, while the remainder of the serine residue undergoes an oxidative deamination to produce ammonia and the pyruvoyl prosthetic group on the alpha chain.

The protein resides in the cell membrane. It catalyses the reaction a 1,2-diacyl-sn-glycero-3-phospho-L-serine + H(+) = a 1,2-diacyl-sn-glycero-3-phosphoethanolamine + CO2. It participates in phospholipid metabolism; phosphatidylethanolamine biosynthesis; phosphatidylethanolamine from CDP-diacylglycerol: step 2/2. Functionally, catalyzes the formation of phosphatidylethanolamine (PtdEtn) from phosphatidylserine (PtdSer). This Bacteroides thetaiotaomicron (strain ATCC 29148 / DSM 2079 / JCM 5827 / CCUG 10774 / NCTC 10582 / VPI-5482 / E50) protein is Phosphatidylserine decarboxylase proenzyme.